The sequence spans 254 residues: Flavin-dependent thymidylate synthase (254 aa).

The ThyX domain maps to 7–237 (LRVQLIAKTE…PAVFADFEIT (231 aa)). DUMP-binding positions include 92 to 95 (ELIR), 103 to 107 (QLSQR), and histidine 176. Residues 95 to 97 (RHR) and glutamine 103 contribute to the FAD site. Residues 95–105 (RHRHFSYSQLS) carry the ThyX motif motif. FAD-binding positions include 192-194 (NYR) and histidine 198. Arginine 203 contributes to the dUMP binding site. Arginine 203 functions as the Involved in ionization of N3 of dUMP, leading to its activation in the catalytic mechanism.

It belongs to the thymidylate synthase ThyX family. As to quaternary structure, homotetramer. The cofactor is FAD.

It catalyses the reaction dUMP + (6R)-5,10-methylene-5,6,7,8-tetrahydrofolate + NADPH + H(+) = dTMP + (6S)-5,6,7,8-tetrahydrofolate + NADP(+). Its pathway is pyrimidine metabolism; dTTP biosynthesis. Functionally, catalyzes the reductive methylation of 2'-deoxyuridine-5'-monophosphate (dUMP) to 2'-deoxythymidine-5'-monophosphate (dTMP) while utilizing 5,10-methylenetetrahydrofolate (mTHF) as the methyl donor, and NADPH and FADH(2) as the reductant. The polypeptide is Flavin-dependent thymidylate synthase (Mycobacterium leprae (strain Br4923)).